The sequence spans 304 residues: Putative S-adenosyl-L-methionine-dependent methyltransferase MSMEG_1482/MSMEI_1446 (304 aa).

S-adenosyl-L-methionine contacts are provided by residues D130 and 159-160 (DL).

It belongs to the UPF0677 family.

Its function is as follows. Exhibits S-adenosyl-L-methionine-dependent methyltransferase activity. This chain is Putative S-adenosyl-L-methionine-dependent methyltransferase MSMEG_1482/MSMEI_1446, found in Mycolicibacterium smegmatis (strain ATCC 700084 / mc(2)155) (Mycobacterium smegmatis).